Here is a 1070-residue protein sequence, read N- to C-terminus: Isoleucine--tRNA ligase (1070 aa).

The 'HIGH' region signature appears at 50 to 60; it reads PYTSGAAHMGT. The 'KMSKS' region motif lies at 606–610; sequence GMSKS. Lys-609 contacts ATP.

This sequence belongs to the class-I aminoacyl-tRNA synthetase family. IleS type 2 subfamily. Monomer. It depends on Zn(2+) as a cofactor.

It is found in the cytoplasm. It catalyses the reaction tRNA(Ile) + L-isoleucine + ATP = L-isoleucyl-tRNA(Ile) + AMP + diphosphate. Its function is as follows. Catalyzes the attachment of isoleucine to tRNA(Ile). As IleRS can inadvertently accommodate and process structurally similar amino acids such as valine, to avoid such errors it has two additional distinct tRNA(Ile)-dependent editing activities. One activity is designated as 'pretransfer' editing and involves the hydrolysis of activated Val-AMP. The other activity is designated 'posttransfer' editing and involves deacylation of mischarged Val-tRNA(Ile). In Halobacterium salinarum (strain ATCC 700922 / JCM 11081 / NRC-1) (Halobacterium halobium), this protein is Isoleucine--tRNA ligase.